A 210-amino-acid polypeptide reads, in one-letter code: Noranthrone monooxygenase (210 aa).

Helical transmembrane passes span 59 to 79, 105 to 125, 131 to 151, and 188 to 208; these read TGSF…PILI, GIAL…YSVG, WMVA…FMNA, and VRAL…CGVV.

Belongs to the anthrone oxygenase family.

The protein resides in the membrane. It catalyses the reaction noranthrone + O2 = norsolorinic acid + H2O. It functions in the pathway mycotoxin biosynthesis; aflatoxin biosynthesis. Monooxygenase that converts norsolorinic acid anthrone to norsolorinic acid during aflatoxin biosynthesis. The protein is Noranthrone monooxygenase (hypC) of Aspergillus flavus (strain ATCC 200026 / FGSC A1120 / IAM 13836 / NRRL 3357 / JCM 12722 / SRRC 167).